A 570-amino-acid chain; its full sequence is 15-cis-phytoene desaturase, chloroplastic/chromoplastic (570 aa).

A chloroplast and chromoplast-targeting transit peptide spans 1 to 91 (MSIVGLVSVV…AQLSASFRSS (91 aa)). Residues 104–120 (GAGLAGLSTAKYLADAG), Ala-108, 127–128 (ES), Lys-135, 152–153 (HI), and Tyr-158 each bind FAD. Arg-293 contributes to the substrate binding site. Asp-524 contributes to the FAD binding site. Ala-532 contacts substrate. Met-534 provides a ligand contact to FAD.

The protein belongs to the carotenoid/retinoid oxidoreductase family. Homotetramer. FAD serves as cofactor. In terms of tissue distribution, expressed more strongly in flowers than in leaves.

It is found in the plastid. The protein localises to the chloroplast. It localises to the chromoplast. The protein resides in the membrane. It carries out the reaction 2 a plastoquinone + 15-cis-phytoene = 9,9',15-tri-cis-zeta-carotene + 2 a plastoquinol. It functions in the pathway carotenoid biosynthesis; lycopene biosynthesis. Its function is as follows. Converts phytoene into zeta-carotene via the intermediary of phytofluene by the symmetrical introduction of two double bonds at the C-11 and C-11' positions of phytoene with a concomitant isomerization of two neighboring double bonds at the C9 and C9' positions from trans to cis. The polypeptide is 15-cis-phytoene desaturase, chloroplastic/chromoplastic (PDS1) (Narcissus pseudonarcissus (Daffodil)).